Consider the following 219-residue polypeptide: Regulatory protein YeiL (219 aa).

Residues 19-97 are sensory domain; the sequence is RLFHFLARDY…IEECWCLALP (79 aa). [4Fe-4S] cluster is bound by residues C68, C91, C93, and C116. The interval 111-131 is dimer interface; that stretch reads FLRKLCVTLSHKNYRNIVSLT. The 64-residue stretch at 136-199 folds into the HTH crp-type domain; it reads FPLVNRLAAF…KKGYLIKNRK (64 aa). The H-T-H motif DNA-binding region spans 158-181; the sequence is KHTQAAEYLGVSYRHLLYVLAQFI.

Homodimer. It depends on [4Fe-4S] cluster as a cofactor.

Its subcellular location is the cytoplasm. Its function is as follows. Transcription regulator involved in mid-term, stationary-phase viability under nitrogen starvation. Might control expression of the salvage pathways or in some other way repress the recycling of nucleobases to nucleic acids and enhance their use as general nitrogen sources during nitrogen-limited growth. The sequence is that of Regulatory protein YeiL (yeiL) from Escherichia coli O157:H7.